Here is a 470-residue protein sequence, read N- to C-terminus: Siroheme synthase (470 aa).

A precorrin-2 dehydrogenase /sirohydrochlorin ferrochelatase region spans residues 1–201; the sequence is MDYFPIFCQL…NDHVQADQHV (201 aa). NAD(+) is bound by residues 22-23 and 43-44; these read EI and CE. Position 128 is a phosphoserine (Ser128). Residues 213–470 form a uroporphyrinogen-III C-methyltransferase region; the sequence is GEVVLVGAGP…KVTECVAHVG (258 aa). Pro222 provides a ligand contact to S-adenosyl-L-methionine. Catalysis depends on Asp245, which acts as the Proton acceptor. Catalysis depends on Lys267, which acts as the Proton donor. Residues 298-300, Ile303, 328-329, Met379, and Gly408 contribute to the S-adenosyl-L-methionine site; these read GGD and TA.

The protein in the N-terminal section; belongs to the precorrin-2 dehydrogenase / sirohydrochlorin ferrochelatase family. It in the C-terminal section; belongs to the precorrin methyltransferase family.

The enzyme catalyses uroporphyrinogen III + 2 S-adenosyl-L-methionine = precorrin-2 + 2 S-adenosyl-L-homocysteine + H(+). It catalyses the reaction precorrin-2 + NAD(+) = sirohydrochlorin + NADH + 2 H(+). The catalysed reaction is siroheme + 2 H(+) = sirohydrochlorin + Fe(2+). Its pathway is cofactor biosynthesis; adenosylcobalamin biosynthesis; precorrin-2 from uroporphyrinogen III: step 1/1. It participates in cofactor biosynthesis; adenosylcobalamin biosynthesis; sirohydrochlorin from precorrin-2: step 1/1. The protein operates within porphyrin-containing compound metabolism; siroheme biosynthesis; precorrin-2 from uroporphyrinogen III: step 1/1. It functions in the pathway porphyrin-containing compound metabolism; siroheme biosynthesis; siroheme from sirohydrochlorin: step 1/1. Its pathway is porphyrin-containing compound metabolism; siroheme biosynthesis; sirohydrochlorin from precorrin-2: step 1/1. Its function is as follows. Multifunctional enzyme that catalyzes the SAM-dependent methylations of uroporphyrinogen III at position C-2 and C-7 to form precorrin-2 via precorrin-1. Then it catalyzes the NAD-dependent ring dehydrogenation of precorrin-2 to yield sirohydrochlorin. Finally, it catalyzes the ferrochelation of sirohydrochlorin to yield siroheme. The chain is Siroheme synthase from Yersinia pestis.